Consider the following 159-residue polypeptide: Ribosomal RNA large subunit methyltransferase H (159 aa).

S-adenosyl-L-methionine contacts are provided by residues Leu76, Gly108, and 127–132 (FGRLTL).

It belongs to the RNA methyltransferase RlmH family. Homodimer.

It is found in the cytoplasm. The enzyme catalyses pseudouridine(1915) in 23S rRNA + S-adenosyl-L-methionine = N(3)-methylpseudouridine(1915) in 23S rRNA + S-adenosyl-L-homocysteine + H(+). Its function is as follows. Specifically methylates the pseudouridine at position 1915 (m3Psi1915) in 23S rRNA. The chain is Ribosomal RNA large subunit methyltransferase H from Listeria monocytogenes serotype 4a (strain HCC23).